The sequence spans 250 residues: 5'-nucleotidase SurE (250 aa).

A divalent metal cation is bound by residues Asp8, Asp9, Ser40, and Asn95.

Belongs to the SurE nucleotidase family. The cofactor is a divalent metal cation.

Its subcellular location is the cytoplasm. It catalyses the reaction a ribonucleoside 5'-phosphate + H2O = a ribonucleoside + phosphate. In terms of biological role, nucleotidase that shows phosphatase activity on nucleoside 5'-monophosphates. The polypeptide is 5'-nucleotidase SurE (Nitratidesulfovibrio vulgaris (strain DP4) (Desulfovibrio vulgaris)).